A 109-amino-acid chain; its full sequence is uncharacterized protein (109 aa).

The next 2 membrane-spanning stretches (helical) occupy residues 24 to 44 (SLGILMGGSTSCMVGMNSAFV) and 68 to 88 (VIVLFNTLVFRSPLFLFSIFI).

The protein resides in the membrane. This is an uncharacterized protein from Saccharomyces cerevisiae (strain ATCC 204508 / S288c) (Baker's yeast).